We begin with the raw amino-acid sequence, 210 residues long: uncharacterized protein (210 aa).

The first 21 residues, 1 to 21, serve as a signal peptide directing secretion; it reads MLKMNVKKALVILVALALVAA.

This is an uncharacterized protein from Archaeoglobus fulgidus (strain ATCC 49558 / DSM 4304 / JCM 9628 / NBRC 100126 / VC-16).